The sequence spans 88 residues: MKQVLLGGIHFYQKVISPMKPATCRFYPTCSHYGKEAIEKHGALRGGYLTTRRLLRCQPFHPGGLDFVPETFDWKAPLQRENPAEHQK.

Belongs to the UPF0161 family.

It is found in the cell membrane. Functionally, could be involved in insertion of integral membrane proteins into the membrane. This is Putative membrane protein insertion efficiency factor from Exiguobacterium sibiricum (strain DSM 17290 / CCUG 55495 / CIP 109462 / JCM 13490 / 255-15).